Reading from the N-terminus, the 140-residue chain is Nucleoside diphosphate kinase (140 aa).

6 residues coordinate ATP: Lys11, Phe59, Arg87, Thr93, Arg104, and Asn114. His117 functions as the Pros-phosphohistidine intermediate in the catalytic mechanism.

This sequence belongs to the NDK family. Homotetramer. The cofactor is Mg(2+).

It localises to the cytoplasm. It catalyses the reaction a 2'-deoxyribonucleoside 5'-diphosphate + ATP = a 2'-deoxyribonucleoside 5'-triphosphate + ADP. The enzyme catalyses a ribonucleoside 5'-diphosphate + ATP = a ribonucleoside 5'-triphosphate + ADP. Its function is as follows. Major role in the synthesis of nucleoside triphosphates other than ATP. The ATP gamma phosphate is transferred to the NDP beta phosphate via a ping-pong mechanism, using a phosphorylated active-site intermediate. The chain is Nucleoside diphosphate kinase from Acidiphilium cryptum (strain JF-5).